Here is a 260-residue protein sequence, read N- to C-terminus: tRNA pseudouridine synthase C (260 aa).

Residue aspartate 54 is part of the active site.

It belongs to the pseudouridine synthase RluA family.

It catalyses the reaction uridine(65) in tRNA = pseudouridine(65) in tRNA. Its function is as follows. Responsible for synthesis of pseudouridine from uracil-65 in transfer RNAs. The polypeptide is tRNA pseudouridine synthase C (truC) (Salmonella typhimurium (strain LT2 / SGSC1412 / ATCC 700720)).